The sequence spans 525 residues: GMP synthase [glutamine-hydrolyzing] (525 aa).

The Glutamine amidotransferase type-1 domain occupies 8–206; it reads PLLILDFGSQ…VVDICKASTD (199 aa). Catalysis depends on Cys-85, which acts as the Nucleophile. Active-site residues include His-180 and Glu-182. A GMPS ATP-PPase domain is found at 207 to 400; that stretch reads WTPEHIIDEA…LGLPHDMVYR (194 aa). 234 to 240 lines the ATP pocket; the sequence is SGGVDSS.

As to quaternary structure, homodimer.

The catalysed reaction is XMP + L-glutamine + ATP + H2O = GMP + L-glutamate + AMP + diphosphate + 2 H(+). It functions in the pathway purine metabolism; GMP biosynthesis; GMP from XMP (L-Gln route): step 1/1. Catalyzes the synthesis of GMP from XMP. This Legionella pneumophila (strain Paris) protein is GMP synthase [glutamine-hydrolyzing].